The following is a 197-amino-acid chain: Dephospho-CoA kinase (197 aa).

A DPCK domain is found at 3–197 (VYGLTGGIGS…QSLLHTHQNT (195 aa)). Residue 11 to 16 (GSGKTT) participates in ATP binding.

The protein belongs to the CoaE family.

It is found in the cytoplasm. The catalysed reaction is 3'-dephospho-CoA + ATP = ADP + CoA + H(+). The protein operates within cofactor biosynthesis; coenzyme A biosynthesis; CoA from (R)-pantothenate: step 5/5. Catalyzes the phosphorylation of the 3'-hydroxyl group of dephosphocoenzyme A to form coenzyme A. The sequence is that of Dephospho-CoA kinase from Hydrogenovibrio crunogenus (strain DSM 25203 / XCL-2) (Thiomicrospira crunogena).